The sequence spans 115 residues: Large ribosomal subunit protein bL20 (115 aa).

Belongs to the bacterial ribosomal protein bL20 family.

In terms of biological role, binds directly to 23S ribosomal RNA and is necessary for the in vitro assembly process of the 50S ribosomal subunit. It is not involved in the protein synthesizing functions of that subunit. The polypeptide is Large ribosomal subunit protein bL20 (Myxococcus xanthus (strain DK1622)).